Here is a 450-residue protein sequence, read N- to C-terminus: Trigger factor (450 aa).

The PPIase FKBP-type domain maps to 161–246 (GDRVVIDFKG…VKTVEAPEYP (86 aa)). Residues 422-450 (PMSLQELMSPQQPEAESAEGESKQDETKE) form a disordered region. The span at 441–450 (GESKQDETKE) shows a compositional bias: basic and acidic residues.

Belongs to the FKBP-type PPIase family. Tig subfamily.

The protein resides in the cytoplasm. The catalysed reaction is [protein]-peptidylproline (omega=180) = [protein]-peptidylproline (omega=0). Involved in protein export. Acts as a chaperone by maintaining the newly synthesized protein in an open conformation. Functions as a peptidyl-prolyl cis-trans isomerase. The sequence is that of Trigger factor from Alkalilimnicola ehrlichii (strain ATCC BAA-1101 / DSM 17681 / MLHE-1).